Consider the following 95-residue polypeptide: Aspartyl/glutamyl-tRNA(Asn/Gln) amidotransferase subunit C (95 aa).

It belongs to the GatC family. In terms of assembly, heterotrimer of A, B and C subunits.

It carries out the reaction L-glutamyl-tRNA(Gln) + L-glutamine + ATP + H2O = L-glutaminyl-tRNA(Gln) + L-glutamate + ADP + phosphate + H(+). It catalyses the reaction L-aspartyl-tRNA(Asn) + L-glutamine + ATP + H2O = L-asparaginyl-tRNA(Asn) + L-glutamate + ADP + phosphate + 2 H(+). In terms of biological role, allows the formation of correctly charged Asn-tRNA(Asn) or Gln-tRNA(Gln) through the transamidation of misacylated Asp-tRNA(Asn) or Glu-tRNA(Gln) in organisms which lack either or both of asparaginyl-tRNA or glutaminyl-tRNA synthetases. The reaction takes place in the presence of glutamine and ATP through an activated phospho-Asp-tRNA(Asn) or phospho-Glu-tRNA(Gln). In Rhodospirillum centenum (strain ATCC 51521 / SW), this protein is Aspartyl/glutamyl-tRNA(Asn/Gln) amidotransferase subunit C.